Consider the following 122-residue polypeptide: MARIAGVDLPRGKRVDIALTYIYGIGRTTALQILDVTGVDWSRNIDDLSADEVNEIRKELEQNHKVEGDLRREISSNIKRLMDIGCYRGLRHRRGLPVHGQRTHTNARTRKGPRRGAVGKKK.

Residues 95 to 122 (GLPVHGQRTHTNARTRKGPRRGAVGKKK) are disordered.

This sequence belongs to the universal ribosomal protein uS13 family. As to quaternary structure, part of the 30S ribosomal subunit. Forms a loose heterodimer with protein S19. Forms two bridges to the 50S subunit in the 70S ribosome.

Its function is as follows. Located at the top of the head of the 30S subunit, it contacts several helices of the 16S rRNA. In the 70S ribosome it contacts the 23S rRNA (bridge B1a) and protein L5 of the 50S subunit (bridge B1b), connecting the 2 subunits; these bridges are implicated in subunit movement. Contacts the tRNAs in the A and P-sites. This Nitratidesulfovibrio vulgaris (strain DSM 19637 / Miyazaki F) (Desulfovibrio vulgaris) protein is Small ribosomal subunit protein uS13.